The chain runs to 452 residues: Pup--protein ligase (452 aa).

Glutamate 9 contacts Mg(2+). Arginine 53 contacts ATP. A Mg(2+)-binding site is contributed by tyrosine 55. Catalysis depends on aspartate 57, which acts as the Proton acceptor. Glutamate 63 is a binding site for Mg(2+). The ATP site is built by threonine 66 and tryptophan 419.

Belongs to the Pup ligase/Pup deamidase family. Pup-conjugating enzyme subfamily.

The catalysed reaction is ATP + [prokaryotic ubiquitin-like protein]-L-glutamate + [protein]-L-lysine = ADP + phosphate + N(6)-([prokaryotic ubiquitin-like protein]-gamma-L-glutamyl)-[protein]-L-lysine.. It participates in protein degradation; proteasomal Pup-dependent pathway. The protein operates within protein modification; protein pupylation. Its function is as follows. Catalyzes the covalent attachment of the prokaryotic ubiquitin-like protein modifier Pup to the proteasomal substrate proteins, thereby targeting them for proteasomal degradation. This tagging system is termed pupylation. The ligation reaction involves the side-chain carboxylate of the C-terminal glutamate of Pup and the side-chain amino group of a substrate lysine. In Rhodococcus jostii (strain RHA1), this protein is Pup--protein ligase.